We begin with the raw amino-acid sequence, 316 residues long: Diacylglycerol kinase (316 aa).

The DAGKc domain occupies 1–132 (MRKRARIIYN…VDIGKMNNRY (132 aa)). ATP is bound by residues 10 to 14 (NPTSG), Thr41, 67 to 73 (GDGTLNE), and Thr94. Residues Lys213, Asp216, and Tyr218 each contribute to the Mg(2+) site. Residue Glu273 is the Proton acceptor of the active site.

This sequence belongs to the diacylglycerol/lipid kinase family. In terms of assembly, homodimer. Mg(2+) serves as cofactor.

The catalysed reaction is a 1,2-diacyl-sn-glycerol + ATP = a 1,2-diacyl-sn-glycero-3-phosphate + ADP + H(+). In terms of biological role, catalyzes the phosphorylation of diacylglycerol (DAG) into phosphatidic acid. Is a key enzyme involved in the production of lipoteichoic acid by reintroducing DAG formed from the breakdown of membrane phospholipids into the phosphatidylglycerol biosynthetic pathway. This Staphylococcus epidermidis (strain ATCC 35984 / DSM 28319 / BCRC 17069 / CCUG 31568 / BM 3577 / RP62A) protein is Diacylglycerol kinase (dagK).